A 696-amino-acid chain; its full sequence is DNA ligase (696 aa).

NAD(+)-binding positions include 55–59 (DYEFD), 105–106 (SL), and Glu137. Residue Lys139 is the N6-AMP-lysine intermediate of the active site. Positions 160, 194, 310, and 334 each coordinate NAD(+). The Zn(2+) site is built by Cys428, Cys431, Cys446, and Cys451. The 82-residue stretch at 615-696 (NVNPNFVGKN…EFIELKDKFD (82 aa)) folds into the BRCT domain.

This sequence belongs to the NAD-dependent DNA ligase family. LigA subfamily. Mg(2+) serves as cofactor. It depends on Mn(2+) as a cofactor.

It carries out the reaction NAD(+) + (deoxyribonucleotide)n-3'-hydroxyl + 5'-phospho-(deoxyribonucleotide)m = (deoxyribonucleotide)n+m + AMP + beta-nicotinamide D-nucleotide.. In terms of biological role, DNA ligase that catalyzes the formation of phosphodiester linkages between 5'-phosphoryl and 3'-hydroxyl groups in double-stranded DNA using NAD as a coenzyme and as the energy source for the reaction. It is essential for DNA replication and repair of damaged DNA. The chain is DNA ligase from Fusobacterium nucleatum subsp. nucleatum (strain ATCC 25586 / DSM 15643 / BCRC 10681 / CIP 101130 / JCM 8532 / KCTC 2640 / LMG 13131 / VPI 4355).